Consider the following 93-residue polypeptide: YcgL domain-containing protein Spea_2443 (93 aa).

The YcgL domain occupies 1–85 (MICAVYKSLR…PVVNLLEQHK (85 aa)).

The protein is YcgL domain-containing protein Spea_2443 of Shewanella pealeana (strain ATCC 700345 / ANG-SQ1).